A 359-amino-acid polypeptide reads, in one-letter code: Hereditary hemochromatosis protein homolog (359 aa).

The signal sequence occupies residues 1 to 24; it reads MSLSAGLPVRPLLLLLLLLWSVAP. Residues 25 to 126 form an alpha-1 region; it reads QALPPRSHSL…KVTKLGVVSE (102 aa). At 25 to 318 the chain is on the extracellular side; sequence QALPPRSHSL…WEPLQSQAMI (294 aa). Residues Asn114, Asn142, Asn166, and Asn246 are each glycosylated (N-linked (GlcNAc...) asparagine). The tract at residues 127-217 is alpha-2; the sequence is SHILQVVLGC…ELGRGVLGQQ (91 aa). Cystine bridges form between Cys136-Cys199 and Cys237-Cys294. The interval 218–309 is alpha-3; that stretch reads VPTLVKVTRH…GLDQPLTASW (92 aa). Positions 219 to 308 constitute an Ig-like C1-type domain; the sequence is PTLVKVTRHW…PGLDQPLTAS (90 aa). The segment at 310 to 318 is connecting peptide; it reads EPLQSQAMI. A helical membrane pass occupies residues 319–339; the sequence is IGIISGVTVCAIFLVGILFLI. At 340 to 359 the chain is on the cytoplasmic side; the sequence is LRKRKASGGTMGGYVLTDCE.

It belongs to the MHC class I family. In terms of assembly, binds TFR through the extracellular domain in a pH-dependent manner.

Its subcellular location is the cell membrane. Binds to transferrin receptor (TFR) and reduces its affinity for iron-loaded transferrin. The polypeptide is Hereditary hemochromatosis protein homolog (Hfe) (Mus musculus (Mouse)).